A 166-amino-acid chain; its full sequence is NADPH-dependent 7-cyano-7-deazaguanine reductase (166 aa).

Cys-57 functions as the Thioimide intermediate in the catalytic mechanism. Asp-64 acts as the Proton donor in catalysis. Substrate-binding positions include 79–81 (VES) and 98–99 (HE).

It belongs to the GTP cyclohydrolase I family. QueF type 1 subfamily.

It localises to the cytoplasm. The catalysed reaction is 7-aminomethyl-7-carbaguanine + 2 NADP(+) = 7-cyano-7-deazaguanine + 2 NADPH + 3 H(+). It functions in the pathway tRNA modification; tRNA-queuosine biosynthesis. Its function is as follows. Catalyzes the NADPH-dependent reduction of 7-cyano-7-deazaguanine (preQ0) to 7-aminomethyl-7-deazaguanine (preQ1). The chain is NADPH-dependent 7-cyano-7-deazaguanine reductase from Staphylococcus haemolyticus (strain JCSC1435).